Reading from the N-terminus, the 367-residue chain is Phosphoribosylaminoimidazole-succinocarboxamide synthase (367 aa).

The protein belongs to the SAICAR synthetase family.

It carries out the reaction 5-amino-1-(5-phospho-D-ribosyl)imidazole-4-carboxylate + L-aspartate + ATP = (2S)-2-[5-amino-1-(5-phospho-beta-D-ribosyl)imidazole-4-carboxamido]succinate + ADP + phosphate + 2 H(+). It participates in purine metabolism; IMP biosynthesis via de novo pathway; 5-amino-1-(5-phospho-D-ribosyl)imidazole-4-carboxamide from 5-amino-1-(5-phospho-D-ribosyl)imidazole-4-carboxylate: step 1/2. The protein is Phosphoribosylaminoimidazole-succinocarboxamide synthase of Vibrio parahaemolyticus serotype O3:K6 (strain RIMD 2210633).